Consider the following 303-residue polypeptide: Type II methyltransferase M.MjaI (303 aa).

The protein belongs to the N(4)/N(6)-methyltransferase family. N(4) subfamily.

It catalyses the reaction a 2'-deoxycytidine in DNA + S-adenosyl-L-methionine = an N(4)-methyl-2'-deoxycytidine in DNA + S-adenosyl-L-homocysteine + H(+). Functionally, a beta subtype methylase that recognizes the double-stranded sequence 5'-CTAG-3', methylates C-1 on both strands, and protects the DNA from cleavage by the MjaI endonuclease. The polypeptide is Type II methyltransferase M.MjaI (mjaIM) (Methanocaldococcus jannaschii (strain ATCC 43067 / DSM 2661 / JAL-1 / JCM 10045 / NBRC 100440) (Methanococcus jannaschii)).